The primary structure comprises 1169 residues: DNA-directed RNA polymerase subunit beta (1169 aa).

Belongs to the RNA polymerase beta chain family. As to quaternary structure, the RNAP catalytic core consists of 2 alpha, 1 beta, 1 beta' and 1 omega subunit. When a sigma factor is associated with the core the holoenzyme is formed, which can initiate transcription. Interacts with RbpA, which partially restores Rif-inhibited transcription.

It catalyses the reaction RNA(n) + a ribonucleoside 5'-triphosphate = RNA(n+1) + diphosphate. Functionally, DNA-dependent RNA polymerase catalyzes the transcription of DNA into RNA using the four ribonucleoside triphosphates as substrates. This subunit often mutates to generate rifampicin (Rif) resistance. Interaction with RbpA partially restores Rif-inhibited transcription; once the subunit is Rif-resistant however RbpA no longer stimulates transcription. This is DNA-directed RNA polymerase subunit beta from Mycolicibacterium smegmatis (strain ATCC 700084 / mc(2)155) (Mycobacterium smegmatis).